The chain runs to 543 residues: MKRRKTALMMLSVLMVLAIFLSACSGSKSSNSSAKKSAGKPQQGGDLVVGSIGEPTLFNSLYSTDDASTDIENMLYSFLTKTDEKLNVKLSLAESIKELDGGLAYDVKIKKGVKFHDGKELTADDVVFTYSVPLSKDYKGERGSTYEMLKSVEKKGDYEVLFKLKYKDGNFYNNALDSTAILPKHILGNVPIADLEENEFNRKKPIGSGPFKFKEWKQGQYIKLEANDDYFEGRPYLDTVTYKVIPDANAAVAQLQAGDINFFNVPATDYKTAEKFNNLKIVTDLALSYVYIGWNEKNELFKDKKVRQALTTALDRESIVSQVLDGDGEVAYIPESPLSWNYPKDIDVPKFEYNEKKAKQMLAEAGWKDTNGDGILDKDGKKFSFTLKTNQGNKVREDIAVVVQEQLKKIGIEVKTQIVEWSALVEQMNPPNWDFDAMVMGWSLSTFPDQYDIFHSSQIKKGLNYVWYKNAEADKLMKDAKSISDRKQYSKEYEQIYQKIAEDQPYTFLYYPNNHMAMPENLEGYKYHPKRDLYNIEKWWLAK.

An N-terminal signal peptide occupies residues 1 to 23 (MKRRKTALMMLSVLMVLAIFLSA). Cysteine 24 is lipidated: N-palmitoyl cysteine. Residue cysteine 24 is the site of S-diacylglycerol cysteine attachment.

This sequence belongs to the bacterial solute-binding protein 5 family.

The protein resides in the cell membrane. This protein is a component of an oligopeptide permease, a binding protein-dependent transport system. This APP system can completely substitute for the OPP system in both sporulation and genetic competence. AppA can bind and transport tetra- and pentapeptides but not tripeptides. This is Oligopeptide-binding protein AppA (appA) from Bacillus subtilis (strain 168).